A 282-amino-acid chain; its full sequence is UDP-N-acetylenolpyruvoylglucosamine reductase (282 aa).

The FAD-binding PCMH-type domain occupies 15 to 179; that stretch reads IKSFAKYVYF…LSAEFEFEYK (165 aa). Residue R157 is part of the active site. The Proton donor role is filled by S207. Residue E278 is part of the active site.

This sequence belongs to the MurB family. FAD serves as cofactor.

Its subcellular location is the cytoplasm. It carries out the reaction UDP-N-acetyl-alpha-D-muramate + NADP(+) = UDP-N-acetyl-3-O-(1-carboxyvinyl)-alpha-D-glucosamine + NADPH + H(+). The protein operates within cell wall biogenesis; peptidoglycan biosynthesis. Functionally, cell wall formation. The polypeptide is UDP-N-acetylenolpyruvoylglucosamine reductase (Francisella tularensis subsp. tularensis (strain SCHU S4 / Schu 4)).